Here is a 381-residue protein sequence, read N- to C-terminus: N-acetyldiaminopimelate deacetylase (381 aa).

Residue Asp73 is part of the active site. The active-site Proton acceptor is Glu132.

The protein belongs to the peptidase M20A family. N-acetyldiaminopimelate deacetylase subfamily.

The catalysed reaction is N-acetyl-(2S,6S)-2,6-diaminopimelate + H2O = (2S,6S)-2,6-diaminopimelate + acetate. It functions in the pathway amino-acid biosynthesis; L-lysine biosynthesis via DAP pathway; LL-2,6-diaminopimelate from (S)-tetrahydrodipicolinate (acetylase route): step 3/3. Its function is as follows. Catalyzes the conversion of N-acetyl-diaminopimelate to diaminopimelate and acetate. In Limosilactobacillus reuteri (strain DSM 20016) (Lactobacillus reuteri), this protein is N-acetyldiaminopimelate deacetylase.